The following is a 561-amino-acid chain: Dihydroxy-acid dehydratase (561 aa).

Residue Cys-50 coordinates [2Fe-2S] cluster. A Mg(2+)-binding site is contributed by Asp-82. Residue Cys-123 coordinates [2Fe-2S] cluster. 2 residues coordinate Mg(2+): Asp-124 and Lys-125. Lys-125 bears the N6-carboxylysine mark. Cys-195 provides a ligand contact to [2Fe-2S] cluster. A Mg(2+)-binding site is contributed by Glu-447. The active-site Proton acceptor is Ser-473.

The protein belongs to the IlvD/Edd family. As to quaternary structure, homodimer. Requires [2Fe-2S] cluster as cofactor. Mg(2+) is required as a cofactor.

The catalysed reaction is (2R)-2,3-dihydroxy-3-methylbutanoate = 3-methyl-2-oxobutanoate + H2O. The enzyme catalyses (2R,3R)-2,3-dihydroxy-3-methylpentanoate = (S)-3-methyl-2-oxopentanoate + H2O. The protein operates within amino-acid biosynthesis; L-isoleucine biosynthesis; L-isoleucine from 2-oxobutanoate: step 3/4. Its pathway is amino-acid biosynthesis; L-valine biosynthesis; L-valine from pyruvate: step 3/4. Functions in the biosynthesis of branched-chain amino acids. Catalyzes the dehydration of (2R,3R)-2,3-dihydroxy-3-methylpentanoate (2,3-dihydroxy-3-methylvalerate) into 2-oxo-3-methylpentanoate (2-oxo-3-methylvalerate) and of (2R)-2,3-dihydroxy-3-methylbutanoate (2,3-dihydroxyisovalerate) into 2-oxo-3-methylbutanoate (2-oxoisovalerate), the penultimate precursor to L-isoleucine and L-valine, respectively. In Rippkaea orientalis (strain PCC 8801 / RF-1) (Cyanothece sp. (strain PCC 8801)), this protein is Dihydroxy-acid dehydratase.